A 139-amino-acid chain; its full sequence is Small ribosomal subunit protein uS12 (139 aa).

The segment at 1–21 (MSTVSQLIKKRRSSKTSKTKA) is disordered. Residues 8 to 18 (IKKRRSSKTSK) are compositionally biased toward basic residues.

Belongs to the universal ribosomal protein uS12 family. In terms of assembly, part of the 30S ribosomal subunit. Contacts proteins S8 and S17. May interact with IF1 in the 30S initiation complex.

Its function is as follows. With S4 and S5 plays an important role in translational accuracy. Interacts with and stabilizes bases of the 16S rRNA that are involved in tRNA selection in the A site and with the mRNA backbone. Located at the interface of the 30S and 50S subunits, it traverses the body of the 30S subunit contacting proteins on the other side and probably holding the rRNA structure together. The combined cluster of proteins S8, S12 and S17 appears to hold together the shoulder and platform of the 30S subunit. This chain is Small ribosomal subunit protein uS12, found in Onion yellows phytoplasma (strain OY-M).